A 274-amino-acid polypeptide reads, in one-letter code: Bis(5'-nucleosyl)-tetraphosphatase, symmetrical (274 aa).

This sequence belongs to the Ap4A hydrolase family.

It catalyses the reaction P(1),P(4)-bis(5'-adenosyl) tetraphosphate + H2O = 2 ADP + 2 H(+). In terms of biological role, hydrolyzes diadenosine 5',5'''-P1,P4-tetraphosphate to yield ADP. The protein is Bis(5'-nucleosyl)-tetraphosphatase, symmetrical of Shewanella loihica (strain ATCC BAA-1088 / PV-4).